The chain runs to 386 residues: S-(hydroxymethyl)glutathione dehydrogenase (386 aa).

Serine 2 bears the N-acetylserine mark. Residue cysteine 49 participates in Zn(2+) binding. Histidine 50 is a binding site for NAD(+). Histidine 71, glutamate 72, cysteine 101, cysteine 104, cysteine 107, cysteine 115, and cysteine 179 together coordinate Zn(2+). Residues 204 to 209, aspartate 228, 300 to 302, and 325 to 327 each bind NAD(+); these read GCGTVG, IGV, and SAF.

The protein belongs to the zinc-containing alcohol dehydrogenase family. Class-III subfamily. Requires Zn(2+) as cofactor.

Its subcellular location is the cytoplasm. It localises to the mitochondrion. The catalysed reaction is a primary alcohol + NAD(+) = an aldehyde + NADH + H(+). It catalyses the reaction a secondary alcohol + NAD(+) = a ketone + NADH + H(+). The enzyme catalyses S-(hydroxymethyl)glutathione + NADP(+) = S-formylglutathione + NADPH + H(+). It carries out the reaction S-(hydroxymethyl)glutathione + NAD(+) = S-formylglutathione + NADH + H(+). The catalysed reaction is S-nitrosoglutathione + NADH + H(+) = S-(hydroxysulfenamide)glutathione + NAD(+). Its function is as follows. Oxidizes long-chain alcohols and, in the presence of glutathione, is able to oxidize formaldehyde. Is responsible for yeast resistance to formaldehyde. Also acts as a S-nitroso-glutathione reductase by catalyzing the NADH-dependent reduction of S-nitrosoglutathione, thereby regulating protein S-nitrosylation. This Saccharomyces cerevisiae (strain ATCC 204508 / S288c) (Baker's yeast) protein is S-(hydroxymethyl)glutathione dehydrogenase (SFA1).